We begin with the raw amino-acid sequence, 331 residues long: tRNA N6-adenosine threonylcarbamoyltransferase (331 aa).

Residues His109, His113, and Tyr130 each coordinate Fe cation. Substrate is bound by residues Tyr130–Gly134, Asp162, Asp183, and Ser262. A Fe cation-binding site is contributed by Asp290.

The protein belongs to the KAE1 / TsaD family. Fe(2+) serves as cofactor.

Its subcellular location is the cytoplasm. The catalysed reaction is L-threonylcarbamoyladenylate + adenosine(37) in tRNA = N(6)-L-threonylcarbamoyladenosine(37) in tRNA + AMP + H(+). Its function is as follows. Required for the formation of a threonylcarbamoyl group on adenosine at position 37 (t(6)A37) in tRNAs that read codons beginning with adenine. Is probably involved in the transfer of the threonylcarbamoyl moiety of threonylcarbamoyl-AMP (TC-AMP) to the N6 group of A37. The chain is tRNA N6-adenosine threonylcarbamoyltransferase from Metallosphaera sedula (strain ATCC 51363 / DSM 5348 / JCM 9185 / NBRC 15509 / TH2).